The chain runs to 945 residues: MSELSRFFIELGERWQRRWREARVFEPEPAPGVPKYFITAAYPYPNGAIHIGHGRTYLVADVMARFQRHLGRSVLFPMGFHYTGTPILTIAEVIAAGDKAVMEEYMELYGVPEEEIKKMGDPLYLARYFHGQSKRAMERFGLSIDWTREFTTIDPEYQRFIQWQFEKLRKKGLIVRGRHPVGWCPRHSMPVGAHDTKDDKEPDIGQWTLVYFTDSEGLTFPTATLRPETVLGVTNLWINPDAEYVVAEFDGRRAVVSRDAAYRLSFQVGVKILREARGREFVGRMVQNPVTGEWVPVYEARFVDPKVGTGVVMSVPAHAPYDYAALRDLGTVKLIPLIRVEGYGDYPAKEVVERMGIKSQADPALEDATKEVYSAEYARGVMREDVAERVGAHLEEPARSMLRAVFKMYFAGRPVREAREFIARWLTEARLGGVMYDIMNKPVYCRCGTEIVVKVLEDQWFINYGESRWKEAARELVKEMSIVPGEARAQFLATIDWLDKRACARTRGLGTPLPWSSGWVIESLSDSTIYMAFYTVVKRIRQFGIRPEQLTEEFWDFVFLGQGSADEVSKKTGVPVEALKAIREEFEYWYPLDSRNSGKDLIPNHLTFFIFNHVAIFPREKWPRQIVANGWVLREGEKMSKSKRNVLPLDRAVEMYGPDPLRATLALAAEVEQDLDFRDAEARRNAQQLMSIYTLAQRLVQGAEERPPTWVDQWLVAEISRVLERAREAYEKVRVRQAAVEVLYNAKAVFDQYLAMVEKPSRQAVEAAKAWAVAMEPLVPHLAEELWATLGGAGFAALAPWPKLRAEPAALLAKRYVDMLIEDVKNIPAFGQGAKRVVIYVNRSFAWVKAALAGDVKTVIGAGVPPQQAKKVVDLVKTLGDEMRGLIAAVDHFDELEALRSYRNYVEKALGAPVEIYGADDPAAPDLGGKKRVALPLKPGIYVEK.

The 'HIGH' region signature appears at 43-53 (PYPNGAIHIGH). The 'KMSKS' region motif lies at 638–642 (KMSKS). K641 lines the ATP pocket.

It belongs to the class-I aminoacyl-tRNA synthetase family.

It is found in the cytoplasm. It carries out the reaction tRNA(Leu) + L-leucine + ATP = L-leucyl-tRNA(Leu) + AMP + diphosphate. This Pyrobaculum neutrophilum (strain DSM 2338 / JCM 9278 / NBRC 100436 / V24Sta) (Thermoproteus neutrophilus) protein is Leucine--tRNA ligase.